A 140-amino-acid polypeptide reads, in one-letter code: Alpha-lactalbumin (140 aa).

A signal peptide spans 1-19 (MMSLLSLLLLGIALPATQA). The C-type lysozyme domain maps to 20–140 (IDYRKCQASQ…CIEDLDQWRC (121 aa)). 4 cysteine pairs are disulfide-bonded: Cys-25/Cys-140, Cys-47/Cys-131, Cys-80/Cys-96, and Cys-92/Cys-110. Residue Asn-63 is glycosylated (N-linked (GlcNAc...) asparagine). Ca(2+) is bound by residues Lys-98, Asp-101, Asp-103, Asp-106, and Asp-107.

It belongs to the glycosyl hydrolase 22 family. As to quaternary structure, lactose synthase (LS) is a heterodimer of a catalytic component, beta1,4-galactosyltransferase (beta4Gal-T1) and a regulatory component, alpha-lactalbumin (LA). As to expression, mammary gland specific. Secreted in milk.

The protein localises to the secreted. Functionally, regulatory subunit of lactose synthase, changes the substrate specificity of galactosyltransferase in the mammary gland making glucose a good acceptor substrate for this enzyme. This enables LS to synthesize lactose, the major carbohydrate component of milk. In other tissues, galactosyltransferase transfers galactose onto the N-acetylglucosamine of the oligosaccharide chains in glycoproteins. This is Alpha-lactalbumin (LALBA) from Notamacropus eugenii (Tammar wallaby).